We begin with the raw amino-acid sequence, 241 residues long: Triosephosphate isomerase (241 aa).

Position 8–10 (8–10 (NWK)) interacts with substrate. Residue His93 is the Electrophile of the active site. Glu163 (proton acceptor) is an active-site residue. Residues Gly169, Ser205, and 226 to 227 (GG) contribute to the substrate site.

This sequence belongs to the triosephosphate isomerase family. Homodimer.

The protein resides in the cytoplasm. The catalysed reaction is D-glyceraldehyde 3-phosphate = dihydroxyacetone phosphate. It functions in the pathway carbohydrate biosynthesis; gluconeogenesis. It participates in carbohydrate degradation; glycolysis; D-glyceraldehyde 3-phosphate from glycerone phosphate: step 1/1. In terms of biological role, involved in the gluconeogenesis. Catalyzes stereospecifically the conversion of dihydroxyacetone phosphate (DHAP) to D-glyceraldehyde-3-phosphate (G3P). The chain is Triosephosphate isomerase from Bdellovibrio bacteriovorus (strain ATCC 15356 / DSM 50701 / NCIMB 9529 / HD100).